A 336-amino-acid polypeptide reads, in one-letter code: Large ribosomal subunit protein uL10 (336 aa).

A disordered region spans residues 292 to 336 (LKEKLSSRAAAPAPEEKEEEVEEEAEEEEEEEEEDAAAGLGALFG). Acidic residues predominate over residues 307-327 (EKEEEVEEEAEEEEEEEEEDA).

This sequence belongs to the universal ribosomal protein uL10 family. Part of the 50S ribosomal subunit. Forms part of the ribosomal stalk which helps the ribosome interact with GTP-bound translation factors. Forms a heptameric L10(L12)2(L12)2(L12)2 complex, where L10 forms an elongated spine to which the L12 dimers bind in a sequential fashion.

Functionally, forms part of the ribosomal stalk, playing a central role in the interaction of the ribosome with GTP-bound translation factors. The chain is Large ribosomal subunit protein uL10 from Methanothermobacter thermautotrophicus (strain ATCC 29096 / DSM 1053 / JCM 10044 / NBRC 100330 / Delta H) (Methanobacterium thermoautotrophicum).